A 439-amino-acid chain; its full sequence is Xylose isomerase (439 aa).

Active-site residues include H101 and D104. Residues E232, E268, H271, D296, D307, D309, and D339 each contribute to the Mg(2+) site.

The protein belongs to the xylose isomerase family. Homotetramer. Mg(2+) is required as a cofactor.

The protein localises to the cytoplasm. It carries out the reaction alpha-D-xylose = alpha-D-xylulofuranose. The polypeptide is Xylose isomerase (Marinomonas sp. (strain MWYL1)).